The chain runs to 178 residues: Interleukin-10 (178 aa).

The signal sequence occupies residues 1 to 18; it reads MHSSALLCCLVVLTGVRA. Disulfide bonds link Cys30-Cys126 and Cys80-Cys132. N-linked (GlcNAc...) asparagine glycosylation occurs at Asn134.

Belongs to the IL-10 family. In terms of assembly, homodimer. Interacts with IL10RA and IL10RB.

The protein localises to the secreted. In terms of biological role, major immune regulatory cytokine that acts on many cells of the immune system where it has profound anti-inflammatory functions, limiting excessive tissue disruption caused by inflammation. Mechanistically, IL10 binds to its heterotetrameric receptor comprising IL10RA and IL10RB leading to JAK1 and STAT2-mediated phosphorylation of STAT3. In turn, STAT3 translocates to the nucleus where it drives expression of anti-inflammatory mediators. Targets antigen-presenting cells (APCs) such as macrophages and monocytes and inhibits their release of pro-inflammatory cytokines including granulocyte-macrophage colony-stimulating factor /GM-CSF, granulocyte colony-stimulating factor/G-CSF, IL-1 alpha, IL-1 beta, IL-6, IL-8 and TNF-alpha. Also interferes with antigen presentation by reducing the expression of MHC-class II and co-stimulatory molecules, thereby inhibiting their ability to induce T cell activation. In addition, controls the inflammatory response of macrophages by reprogramming essential metabolic pathways including mTOR signaling. The protein is Interleukin-10 (IL10) of Papio hamadryas (Hamadryas baboon).